We begin with the raw amino-acid sequence, 142 residues long: MSLTKAERTMVVSIWGKISMQADAVGTEALQRLFSSYPQTKTYFPHFDLHEGSPQLRAHGSKVAAAVGDAVKSIDNVAGALAKLSELHAYILRVDPVNFKFLSHCLLVTLASRLPADFTADAHAAWDKFLSIVSSVLTEKYR.

Serine 2 is subject to N-acetylserine. Positions 2–142 (SLTKAERTMV…VSSVLTEKYR (141 aa)) constitute a Globin domain. Serine 53 carries the post-translational modification Phosphoserine. Position 59 (histidine 59) interacts with heme b. Serine 73 bears the Phosphoserine mark. Histidine 88 is a heme b binding site.

It belongs to the globin family. As to quaternary structure, heterotetramer of two zeta chains and beta-type chains.

In terms of biological role, the zeta chain is an alpha-type chain of mammalian embryonic hemoglobin. This chain is Hemoglobin subunit zeta (HBZ1), found in Equus caballus (Horse).